The sequence spans 756 residues: 5-methyltetrahydropteroyltriglutamate--homocysteine methyltransferase (756 aa).

5-methyltetrahydropteroyltri-L-glutamate-binding positions include 16 to 19 and Lys116; that span reads RELK. L-homocysteine is bound by residues 433–435 and Glu486; that span reads IGS. L-methionine is bound by residues 433–435 and Glu486; that span reads IGS. Residues 517-518 and Trp563 contribute to the 5-methyltetrahydropteroyltri-L-glutamate site; that span reads RC. Residue Asp601 participates in L-homocysteine binding. Asp601 serves as a coordination point for L-methionine. 5-methyltetrahydropteroyltri-L-glutamate is bound at residue Glu607. Zn(2+) is bound by residues His643, Cys645, and Glu667. Residue His696 is the Proton donor of the active site. Position 728 (Cys728) interacts with Zn(2+).

The protein belongs to the vitamin-B12 independent methionine synthase family. It depends on Zn(2+) as a cofactor.

The enzyme catalyses 5-methyltetrahydropteroyltri-L-glutamate + L-homocysteine = tetrahydropteroyltri-L-glutamate + L-methionine. It participates in amino-acid biosynthesis; L-methionine biosynthesis via de novo pathway; L-methionine from L-homocysteine (MetE route): step 1/1. Functionally, catalyzes the transfer of a methyl group from 5-methyltetrahydrofolate to homocysteine resulting in methionine formation. This Buchnera aphidicola subsp. Baizongia pistaciae (strain Bp) protein is 5-methyltetrahydropteroyltriglutamate--homocysteine methyltransferase.